Here is a 494-residue protein sequence, read N- to C-terminus: SNF1-related protein kinase catalytic subunit alpha KIN12 (494 aa).

The Protein kinase domain maps to 19 to 270 (YRIGKTLGHG…ITEIRQHPWF (252 aa)). Residues 25-33 (LGHGSFAKV) and lysine 48 contribute to the ATP site. The active-site Proton acceptor is aspartate 142. Position 175 is a phosphothreonine (threonine 175). Residues 289–386 (AKKIEEEIIQ…GLKSNVKDDK (98 aa)) form an auto-inhibitory domain (AID) region. One can recognise a UBA domain in the interval 291 to 331 (KIEEEIIQNVVNIGFDRNHVVDSLANRIQNEATVAYHLILD). The interval 293–494 (EEEIIQNVVN…VAFLRELGVL (202 aa)) is regulatory domain (RD). The segment at 387–494 (TWTLGLQSQG…VAFLRELGVL (108 aa)) is PPI. Residues 445–493 (AIILPTVIKFEIQLYKVREGKYLLDILRIDGPQFIFFDLCVAFLRELGV) form the KA1 domain.

This sequence belongs to the protein kinase superfamily. CAMK Ser/Thr protein kinase family. SNF1 subfamily. In terms of assembly, subunit of a probable heterotrimeric complex consisting of an alpha catalytic subunit, and a beta (KINB) and a gamma (KING or SNF4) non-catalytic regulatory subunits. Post-translationally, autophosphorylated. Expressed at very low levels.

The enzyme catalyses L-seryl-[protein] + ATP = O-phospho-L-seryl-[protein] + ADP + H(+). It carries out the reaction L-threonyl-[protein] + ATP = O-phospho-L-threonyl-[protein] + ADP + H(+). With respect to regulation, activated by phosphorylation at Thr-175. In terms of biological role, catalytic subunit of the probable trimeric SNF1-related protein kinase (SnRK) complex, a central regulator of cellular energy homeostasis, which, in response to seemingly unrelated darkness, sugar and stress conditions, activates energy-producing pathways and inhibits energy-consuming processes. May also be involved in the regulation of fatty acid synthesis by phosphorylation of acetyl-CoA carboxylase and in assimilation of nitrogen by phosphorylating nitrate reductase. The protein is SNF1-related protein kinase catalytic subunit alpha KIN12 of Arabidopsis thaliana (Mouse-ear cress).